The following is a 344-amino-acid chain: L-threonine 3-dehydrogenase (344 aa).

Residue cysteine 42 participates in Zn(2+) binding. Active-site charge relay system residues include threonine 44 and histidine 47. Histidine 67, glutamate 68, cysteine 97, cysteine 100, cysteine 103, and cysteine 111 together coordinate Zn(2+). Residues isoleucine 179, aspartate 199, arginine 204, 266 to 268, and 290 to 291 each bind NAD(+); these read LGI and IY.

It belongs to the zinc-containing alcohol dehydrogenase family. In terms of assembly, homotetramer. Zn(2+) serves as cofactor.

The protein resides in the cytoplasm. The enzyme catalyses L-threonine + NAD(+) = (2S)-2-amino-3-oxobutanoate + NADH + H(+). Its pathway is amino-acid degradation; L-threonine degradation via oxydo-reductase pathway; glycine from L-threonine: step 1/2. In terms of biological role, catalyzes the NAD(+)-dependent oxidation of L-threonine to 2-amino-3-ketobutyrate. The chain is L-threonine 3-dehydrogenase from Chelativorans sp. (strain BNC1).